The chain runs to 439 residues: Xylose isomerase (439 aa).

Residues H101 and D104 contribute to the active site. Positions 232, 268, 271, 296, 307, 309, and 339 each coordinate Mg(2+).

It belongs to the xylose isomerase family. As to quaternary structure, homotetramer. Requires Mg(2+) as cofactor.

The protein resides in the cytoplasm. The catalysed reaction is alpha-D-xylose = alpha-D-xylulofuranose. This Photobacterium profundum (strain SS9) protein is Xylose isomerase.